A 565-amino-acid chain; its full sequence is Periplasmic trehalase (565 aa).

An N-terminal signal peptide occupies residues methionine 1–alanine 30. Substrate-binding positions include arginine 152, tryptophan 159–aspartate 160, asparagine 196, arginine 205–glutamine 207, arginine 277–glutamate 279, and glycine 310. Catalysis depends on proton donor/acceptor residues aspartate 312 and glutamate 496. Glutamate 511 lines the substrate pocket. A disordered region spans residues cysteine 539–proline 565.

This sequence belongs to the glycosyl hydrolase 37 family. As to quaternary structure, monomer.

The protein localises to the periplasm. It catalyses the reaction alpha,alpha-trehalose + H2O = alpha-D-glucose + beta-D-glucose. Its function is as follows. Provides the cells with the ability to utilize trehalose at high osmolarity by splitting it into glucose molecules that can subsequently be taken up by the phosphotransferase-mediated uptake system. This chain is Periplasmic trehalase, found in Escherichia coli O45:K1 (strain S88 / ExPEC).